Consider the following 206-residue polypeptide: N-(5'-phosphoribosyl)anthranilate isomerase (206 aa).

Belongs to the TrpF family.

The catalysed reaction is N-(5-phospho-beta-D-ribosyl)anthranilate = 1-(2-carboxyphenylamino)-1-deoxy-D-ribulose 5-phosphate. The protein operates within amino-acid biosynthesis; L-tryptophan biosynthesis; L-tryptophan from chorismate: step 3/5. The sequence is that of N-(5'-phosphoribosyl)anthranilate isomerase from Pseudomonas putida (strain ATCC 700007 / DSM 6899 / JCM 31910 / BCRC 17059 / LMG 24140 / F1).